The chain runs to 274 residues: Diaminopimelate epimerase (274 aa).

N11, Q44, and N64 together coordinate substrate. C73 serves as the catalytic Proton donor. Residues 74 to 75, N157, N190, and 208 to 209 each bind substrate; these read GN and ER. C217 (proton acceptor) is an active-site residue. 218–219 lines the substrate pocket; that stretch reads GS.

This sequence belongs to the diaminopimelate epimerase family. In terms of assembly, homodimer.

The protein localises to the cytoplasm. The enzyme catalyses (2S,6S)-2,6-diaminopimelate = meso-2,6-diaminopimelate. It functions in the pathway amino-acid biosynthesis; L-lysine biosynthesis via DAP pathway; DL-2,6-diaminopimelate from LL-2,6-diaminopimelate: step 1/1. Catalyzes the stereoinversion of LL-2,6-diaminopimelate (L,L-DAP) to meso-diaminopimelate (meso-DAP), a precursor of L-lysine and an essential component of the bacterial peptidoglycan. This Escherichia coli O127:H6 (strain E2348/69 / EPEC) protein is Diaminopimelate epimerase.